The following is a 113-amino-acid chain: Large ribosomal subunit protein uL22 (113 aa).

It belongs to the universal ribosomal protein uL22 family. In terms of assembly, part of the 50S ribosomal subunit.

Its function is as follows. This protein binds specifically to 23S rRNA; its binding is stimulated by other ribosomal proteins, e.g. L4, L17, and L20. It is important during the early stages of 50S assembly. It makes multiple contacts with different domains of the 23S rRNA in the assembled 50S subunit and ribosome. In terms of biological role, the globular domain of the protein is located near the polypeptide exit tunnel on the outside of the subunit, while an extended beta-hairpin is found that lines the wall of the exit tunnel in the center of the 70S ribosome. The sequence is that of Large ribosomal subunit protein uL22 from Bacillus mycoides (strain KBAB4) (Bacillus weihenstephanensis).